A 241-amino-acid polypeptide reads, in one-letter code: Large ribosomal subunit protein uL13c (241 aa).

A chloroplast-targeting transit peptide spans 1-50; the sequence is MAVLCSSSTVILSSSSVKSSGSERKSPFLGFSLTAISKPSVRVGIYANSK.

The protein belongs to the universal ribosomal protein uL13 family. In terms of assembly, part of the 50S ribosomal subunit.

It localises to the plastid. The protein resides in the chloroplast. This is Large ribosomal subunit protein uL13c (RPL13) from Arabidopsis thaliana (Mouse-ear cress).